A 491-amino-acid polypeptide reads, in one-letter code: Chromosomal replication initiator protein DnaA (491 aa).

The interval 1–69 (MTTWDKCLKK…TIQECHGNDL (69 aa)) is domain I, interacts with DnaA modulators. The domain II stretch occupies residues 69 to 154 (LIIEYSNKKF…KEDEEYSFGL (86 aa)). Residues 155–371 (PLKEKYVFDS…GALNRVLTTS (217 aa)) are domain III, AAA+ region. Gly199, Gly201, Lys202, and Thr203 together coordinate ATP. Residues 372–491 (KFNHKDPTIE…YELLLDKISR (120 aa)) are domain IV, binds dsDNA.

The protein belongs to the DnaA family. In terms of assembly, oligomerizes as a right-handed, spiral filament on DNA at oriC.

Its subcellular location is the cytoplasm. Functionally, plays an essential role in the initiation and regulation of chromosomal replication. ATP-DnaA binds to the origin of replication (oriC) to initiate formation of the DNA replication initiation complex once per cell cycle. Binds the DnaA box (a 9 base pair repeat at the origin) and separates the double-stranded (ds)DNA. Forms a right-handed helical filament on oriC DNA; dsDNA binds to the exterior of the filament while single-stranded (ss)DNA is stabiized in the filament's interior. The ATP-DnaA-oriC complex binds and stabilizes one strand of the AT-rich DNA unwinding element (DUE), permitting loading of DNA polymerase. After initiation quickly degrades to an ADP-DnaA complex that is not apt for DNA replication. Binds acidic phospholipids. The protein is Chromosomal replication initiator protein DnaA of Francisella tularensis subsp. holarctica (strain LVS).